A 381-amino-acid chain; its full sequence is MIPQTSSLPKPHGGVLVERIRVAHPREYDHLPALELDERAYADLELIATGVYSPLEGFMGQADYLSVLEEMRLTNGLPWSIPITLGVSAQDAASYRKTVRLTKDGRTVGLLDVEEQYRPDKEHEALAVYRTTDLAHPGVAALFARGDVYLAGKVQLLTLDRGPFPEHHYTPRETRQLFQERGWQTIVAFQTRNPIHRAHEYLHKVALESLDGLFLHPLVGSTKSDDVPAPVRMAAYKVLLERYYPQNRVLLGVYPAAMRYAGPREAILHAISRKNYGCTHFIVGRDHAGVGNYYGPYEAQAIFDHFRPEEIGIHILKFEQTFYCVTCAAVVSPRTCPHDTQHHLVLSGTRVRELLRAGSPLPPEFTRPEVAEVLRAAYQTL.

The protein belongs to the sulfate adenylyltransferase family.

The catalysed reaction is sulfate + ATP + H(+) = adenosine 5'-phosphosulfate + diphosphate. It participates in sulfur metabolism; hydrogen sulfide biosynthesis; sulfite from sulfate: step 1/3. This is Sulfate adenylyltransferase from Chloroflexus aurantiacus (strain ATCC 29366 / DSM 635 / J-10-fl).